The chain runs to 505 residues: Glycerol kinase (505 aa).

Threonine 12 is an ADP binding site. ATP contacts are provided by threonine 12, threonine 13, and serine 14. Sn-glycerol 3-phosphate is bound at residue threonine 12. Arginine 16 provides a ligand contact to ADP. Sn-glycerol 3-phosphate-binding residues include arginine 82, glutamate 83, tyrosine 134, and aspartate 249. 5 residues coordinate glycerol: arginine 82, glutamate 83, tyrosine 134, aspartate 249, and glutamine 250. 2 residues coordinate ADP: threonine 271 and glycine 315. 4 residues coordinate ATP: threonine 271, glycine 315, glutamine 319, and glycine 416. Positions 416 and 420 each coordinate ADP.

Belongs to the FGGY kinase family.

It carries out the reaction glycerol + ATP = sn-glycerol 3-phosphate + ADP + H(+). Its pathway is polyol metabolism; glycerol degradation via glycerol kinase pathway; sn-glycerol 3-phosphate from glycerol: step 1/1. Inhibited by fructose 1,6-bisphosphate (FBP). In terms of biological role, key enzyme in the regulation of glycerol uptake and metabolism. Catalyzes the phosphorylation of glycerol to yield sn-glycerol 3-phosphate. The protein is Glycerol kinase of Mycolicibacterium vanbaalenii (strain DSM 7251 / JCM 13017 / BCRC 16820 / KCTC 9966 / NRRL B-24157 / PYR-1) (Mycobacterium vanbaalenii).